An 844-amino-acid polypeptide reads, in one-letter code: Rho guanine nucleotide exchange factor 33 (844 aa).

2 stretches are compositionally biased toward basic and acidic residues: residues 1 to 13 and 101 to 113; these read MEKT…ENEH and QQKI…EKRR. Disordered stretches follow at residues 1–20, 101–142, and 169–189; these read MEKT…NNPS, QQKI…GSPF, and AQES…MGPG. The stretch at 54–129 forms a coiled coil; sequence LEEKVKSCRC…AKKTQKEEHS (76 aa). Residues 130–142 are compositionally biased toward polar residues; the sequence is SQAGPAQAQGSPF. The DH domain maps to 265-440; that stretch reads KRQTVALELL…RVFISHYTLL (176 aa). Disordered stretches follow at residues 498 to 541, 668 to 687, and 702 to 745; these read LQPY…DWEL, RPEH…AGSS, and AKPL…RAAQ. R757 is subject to Omega-N-methylarginine. The segment covering 787 to 800 has biased composition (basic and acidic residues); the sequence is DTTRFCPKEERESE. The disordered stretch occupies residues 787–844; the sequence is DTTRFCPKEERESEQTSFSDQNPRQDQKGGFRSSFRKLFKKKNGNATGEDFCGPWGWW. The segment covering 820–829 has biased composition (basic residues); sequence SFRKLFKKKN.

Its function is as follows. May act as a guanine-nucleotide releasing factor. The chain is Rho guanine nucleotide exchange factor 33 (ARHGEF33) from Homo sapiens (Human).